A 276-amino-acid chain; its full sequence is Small ribosomal subunit protein uS2 (276 aa).

The interval 254 to 276 (LAGATAAAPAEGAVATETTPTEG) is disordered. Positions 255-276 (AGATAAAPAEGAVATETTPTEG) are enriched in low complexity.

It belongs to the universal ribosomal protein uS2 family.

In Mycobacterium ulcerans (strain Agy99), this protein is Small ribosomal subunit protein uS2.